Here is a 216-residue protein sequence, read N- to C-terminus: MTTSAASQASLPRGRRTARPSGDDRELAILATAENLLEDRPLADISVDDLAKGAGISRPTFYFYFPSKEAVLLTLLDRVVNQADMALQTLAENPADTDRENMWRTGINVFFETFGSHKAVTRAGQAARATSVEVAELWSTFMQKWIAYTAAVIDAERDRGAAPRTLPAHELATALNLMNERTLFASFAGEQPSVPEARVLDTLVHIWVTSIYGENR.

The span at 1–10 shows a compositional bias: polar residues; that stretch reads MTTSAASQAS. A disordered region spans residues 1 to 24; that stretch reads MTTSAASQASLPRGRRTARPSGDD. In terms of domain architecture, HTH tetR-type spans 23–83; that stretch reads DDRELAILAT…TLLDRVVNQA (61 aa). Positions 46 to 65 form a DNA-binding region, H-T-H motif; that stretch reads SVDDLAKGAGISRPTFYFYF.

As to quaternary structure, homodimer.

In terms of biological role, involved in the repression of the monooxygenase EthA which is responsible of the formation of the active metabolite of ethionamide (ETH). The chain is HTH-type transcriptional regulator EthR (ethR) from Mycobacterium bovis (strain ATCC BAA-935 / AF2122/97).